We begin with the raw amino-acid sequence, 80 residues long: RNA-binding protein KhpA (80 aa).

Residues 33–80 form the KH domain; the sequence is GRTVEVHVHPDDLGKVIGRGGRTATALRKLVAGIGGRGIRVDVVDTDQ.

It belongs to the KhpA RNA-binding protein family.

Its subcellular location is the cytoplasm. A probable RNA-binding protein. This chain is RNA-binding protein KhpA, found in Mycobacterium leprae (strain TN).